The following is a 251-amino-acid chain: Triosephosphate isomerase (251 aa).

Residue Asn-9–Lys-11 participates in substrate binding. His-95 functions as the Electrophile in the catalytic mechanism. Catalysis depends on Glu-167, which acts as the Proton acceptor. Substrate is bound by residues Gly-173, Ser-212, and Gly-233 to Gly-234.

It belongs to the triosephosphate isomerase family. Homodimer.

It localises to the cytoplasm. The catalysed reaction is D-glyceraldehyde 3-phosphate = dihydroxyacetone phosphate. It functions in the pathway carbohydrate biosynthesis; gluconeogenesis. Its pathway is carbohydrate degradation; glycolysis; D-glyceraldehyde 3-phosphate from glycerone phosphate: step 1/1. In terms of biological role, involved in the gluconeogenesis. Catalyzes stereospecifically the conversion of dihydroxyacetone phosphate (DHAP) to D-glyceraldehyde-3-phosphate (G3P). The sequence is that of Triosephosphate isomerase from Ectopseudomonas mendocina (strain ymp) (Pseudomonas mendocina).